Here is a 238-residue protein sequence, read N- to C-terminus: Octanoyltransferase (238 aa).

The BPL/LPL catalytic domain occupies 40 to 220 (AGGSDALLLL…RVCDALDGRL (181 aa)). Residues 78 to 85 (RGGKITWH), 150 to 152 (AIG), and 163 to 165 (GFA) contribute to the substrate site. Cys181 (acyl-thioester intermediate) is an active-site residue.

Belongs to the LipB family.

Its subcellular location is the cytoplasm. It carries out the reaction octanoyl-[ACP] + L-lysyl-[protein] = N(6)-octanoyl-L-lysyl-[protein] + holo-[ACP] + H(+). Its pathway is protein modification; protein lipoylation via endogenous pathway; protein N(6)-(lipoyl)lysine from octanoyl-[acyl-carrier-protein]: step 1/2. Its function is as follows. Catalyzes the transfer of endogenously produced octanoic acid from octanoyl-acyl-carrier-protein onto the lipoyl domains of lipoate-dependent enzymes. Lipoyl-ACP can also act as a substrate although octanoyl-ACP is likely to be the physiological substrate. This chain is Octanoyltransferase, found in Mycobacterium sp. (strain JLS).